The sequence spans 2179 residues: Voltage-dependent L-type calcium channel subunit alpha-1D (2179 aa).

Disordered stretches follow at residues Met-1–Ala-21, Thr-30–Thr-49, and Lys-64–Ser-100. Topologically, residues Met-1–Lys-126 are cytoplasmic. Polar residues predominate over residues Gly-38–Thr-49. Over residues Gln-82–Lys-93 the composition is skewed to basic residues. Residues Asn-113–Phe-409 form an I repeat. Residues Pro-127 to Ile-145 traverse the membrane as a helical segment. Topologically, residues Tyr-146–Lys-163 are extracellular. The chain crosses the membrane as a helical span at residues Val-164–Tyr-183. Over Gly-184–Asn-195 the chain is Cytoplasmic. Residues Gly-196–Leu-214 form a helical membrane-spanning segment. The Extracellular portion of the chain corresponds to Glu-215–Asp-235. The chain crosses the membrane as a helical span at residues Val-236–Val-254. Topologically, residues Pro-255–His-273 are cytoplasmic. A helical membrane pass occupies residues Ile-274–Phe-293. Topologically, residues Ile-294–Trp-381 are extracellular. Glu-364 contributes to the Ca(2+) binding site. The helical transmembrane segment at Pro-382–Ser-406 threads the bilayer. At Gly-407–Val-543 the chain is on the cytoplasmic side. Residues Gln-429 to Glu-446 are binding to the beta subunit. Residues Asp-449 to Ser-480 are disordered. Over residues Asn-463–Val-479 the composition is skewed to polar residues. The stretch at Asn-529–Leu-775 is one II repeat. A helical membrane pass occupies residues Thr-544–Glu-563. Over His-564–Ala-578 the chain is Extracellular. A helical membrane pass occupies residues Asn-579–Leu-597. Residues Gly-598–Ser-605 lie on the Cytoplasmic side of the membrane. A helical membrane pass occupies residues Leu-606–Leu-624. Topologically, residues Val-625 to Gly-634 are extracellular. A helical membrane pass occupies residues Val-635 to Trp-653. Residues Thr-654–Ser-672 are Cytoplasmic-facing. The helical transmembrane segment at Leu-673–Gly-693 threads the bilayer. Over Gly-694–Ile-747 the chain is Extracellular. Glu-725 is a Ca(2+) binding site. A helical membrane pass occupies residues Val-748–Val-772. Positions Ala-771–Lys-810 form a coiled coil. The Cytoplasmic segment spans residues Asp-773 to His-906. A compositionally biased stretch (basic and acidic residues) spans Lys-786–Lys-810. The tract at residues Lys-786–Glu-870 is disordered. Polar residues predominate over residues Pro-811–Lys-822. The span at Val-845–Glu-858 shows a compositional bias: acidic residues. The stretch at Asn-893 to Phe-1175 is one III repeat. The chain crosses the membrane as a helical span at residues Ile-907 to Ala-925. The Extracellular portion of the chain corresponds to Glu-926–Tyr-941. The chain crosses the membrane as a helical span at residues Phe-942–Phe-961. Topologically, residues Gly-962–Asn-973 are cytoplasmic. A helical transmembrane segment spans residues Tyr-974–Ile-992. Residues Gln-993 to Ser-998 lie on the Extracellular side of the membrane. A helical transmembrane segment spans residues Val-999–Ala-1018. The Cytoplasmic portion of the chain corresponds to Lys-1019–Asn-1037. A helical transmembrane segment spans residues Ile-1038–Phe-1057. The Extracellular segment spans residues Lys-1058–Glu-1147. Residues Arg-1095–Asn-1185 form a dihydropyridine binding region. Ca(2+) is bound at residue Glu-1121. The helical transmembrane segment at Ile-1148–Val-1168 threads the bilayer. The Cytoplasmic portion of the chain corresponds to Gly-1169 to Ser-1225. Residues Asn-1212 to Phe-1487 form an IV repeat. The helical transmembrane segment at Pro-1226 to Met-1244 threads the bilayer. At Gln-1245 to Ile-1259 the chain is on the extracellular side. Residues Leu-1260 to Phe-1279 traverse the membrane as a helical segment. Topologically, residues Lys-1280 to Ser-1286 are cytoplasmic. Residues Asp-1287–Glu-1308 form a helical membrane-spanning segment. Residues Ala-1309–Ile-1333 lie on the Extracellular side of the membrane. The helical transmembrane segment at Ser-1334–Gly-1353 threads the bilayer. Residues Glu-1354–Tyr-1372 are Cytoplasmic-facing. A helical membrane pass occupies residues Val-1373–Phe-1392. The Extracellular portion of the chain corresponds to Gly-1393 to Phe-1459. A dihydropyridine binding region spans residues Leu-1440–Lys-1506. Residues Glu-1452–Ser-1495 form a phenylalkylamine binding region. The helical transmembrane segment at Ala-1460–Met-1484 threads the bilayer. Over Asp-1485–Leu-2179 the chain is Cytoplasmic. 3 disordered regions span residues Leu-1704–Lys-1789, Phe-1896–Phe-1941, and Gly-2135–Asp-2171. Residues Ser-1764–Met-1782 show a composition bias toward polar residues. The segment covering Ser-2156–Asp-2171 has biased composition (acidic residues).

This sequence belongs to the calcium channel alpha-1 subunit (TC 1.A.1.11) family. CACNA1D subfamily. As to quaternary structure, voltage-dependent calcium channels are multisubunit complexes, consisting of alpha-1, alpha-2, beta and delta subunits in a 1:1:1:1 ratio. The channel activity is directed by the pore-forming and voltage-sensitive alpha-1 subunit. In many cases, this subunit is sufficient to generate voltage-sensitive calcium channel activity. The auxiliary subunits beta and alpha-2/delta linked by a disulfide bridge regulate the channel activity. Interacts (via IQ domain) with CABP1 and CABP4 in a calcium independent manner. Interacts with RIMBP2. In terms of tissue distribution, expressed in the inner hair cells (IHC) of the cochlea.

It localises to the membrane. The catalysed reaction is Ca(2+)(in) = Ca(2+)(out). Functionally, voltage-sensitive calcium channels (VSCC) mediate the entry of calcium ions into excitable cells and are also involved in a variety of calcium-dependent processes, including muscle contraction, hormone or neurotransmitter release, gene expression, cell motility, cell division and cell death. The isoform alpha-1D gives rise to L-type calcium currents. Long-lasting (L-type) calcium channels belong to the 'high-voltage activated' (HVA) group. They are blocked by dihydropyridines (DHP), phenylalkylamines, and by benzothiazepines. This is Voltage-dependent L-type calcium channel subunit alpha-1D (Cacna1d) from Mus musculus (Mouse).